Reading from the N-terminus, the 176-residue chain is Cytochrome b (176 aa).

3 consecutive transmembrane segments (helical) span residues 33–53 (FGSLLGICLVLQISTGLFLAM), 77–98 (WVLRYLHANGASMFFICLYLHV), and 113–133 (WNVGVILLFATMATAFMGYVL). Residues His-83 and His-97 each coordinate heme b.

Belongs to the cytochrome b family. The cytochrome bc1 complex contains 11 subunits: 3 respiratory subunits (MT-CYB, CYC1 and UQCRFS1), 2 core proteins (UQCRC1 and UQCRC2) and 6 low-molecular weight proteins (UQCRH/QCR6, UQCRB/QCR7, UQCRQ/QCR8, UQCR10/QCR9, UQCR11/QCR10 and a cleavage product of UQCRFS1). This cytochrome bc1 complex then forms a dimer. The cofactor is heme b.

The protein localises to the mitochondrion inner membrane. Its function is as follows. Component of the ubiquinol-cytochrome c reductase complex (complex III or cytochrome b-c1 complex) that is part of the mitochondrial respiratory chain. The b-c1 complex mediates electron transfer from ubiquinol to cytochrome c. Contributes to the generation of a proton gradient across the mitochondrial membrane that is then used for ATP synthesis. The protein is Cytochrome b (MT-CYB) of Corynorhinus rafinesquii (Rafinesque's big-eared bat).